The following is a 101-amino-acid chain: Ribonuclease P protein component 1 (101 aa).

This sequence belongs to the eukaryotic/archaeal RNase P protein component 1 family. Consists of a catalytic RNA component and at least 4-5 protein subunits.

The protein resides in the cytoplasm. It carries out the reaction Endonucleolytic cleavage of RNA, removing 5'-extranucleotides from tRNA precursor.. In terms of biological role, part of ribonuclease P, a protein complex that generates mature tRNA molecules by cleaving their 5'-ends. This is Ribonuclease P protein component 1 from Methanococcoides burtonii (strain DSM 6242 / NBRC 107633 / OCM 468 / ACE-M).